Reading from the N-terminus, the 515-residue chain is 4-hydroxybenzoate brominase (decarboxylating) (515 aa).

FAD-binding residues include Ser-13, Glu-32, Val-40, Phe-41, His-51, Val-102, and Gln-364.

Belongs to the FMO family. The cofactor is FAD.

The enzyme catalyses 2 bromide + 4-hydroxybenzoate + 2 NADPH + 2 O2 + 5 H(+) = 2,4-dibromophenol + CO2 + 2 NADP(+) + 4 H2O. The catalysed reaction is bromide + 4-hydroxybenzoate + NADPH + O2 + 2 H(+) = 3-bromo-4-hydroxybenzoate + NADP(+) + 2 H2O. It carries out the reaction 3-bromo-4-hydroxybenzoate + bromide + NADPH + O2 + 3 H(+) = 2,4-dibromophenol + CO2 + NADP(+) + 2 H2O. It catalyses the reaction 3,4-dihydroxybenzoate + 2 bromide + 2 NADPH + 2 O2 + 5 H(+) = 3,5-dibromobenzene-1,2-diol + CO2 + 2 NADP(+) + 4 H2O. The enzyme catalyses 3,4-dihydroxybenzoate + bromide + NADPH + O2 + 2 H(+) = 3-bromo-4,5-dihydroxybenzoate + NADP(+) + 2 H2O. The catalysed reaction is 3-bromo-4,5-dihydroxybenzoate + bromide + NADPH + O2 + 3 H(+) = 3,5-dibromobenzene-1,2-diol + CO2 + NADP(+) + 2 H2O. With respect to regulation, activity is abolished in the absence of either bromide or NADPH, while a partial reduction in activity is observed upon omission of FAD. Activity does not require the addition of a flavin reductase to regenerate FADH(2) in situ. Brominase involved in the biosynthesis of polybrominated aromatic organic compounds. Catalyzes the bromination of 4-hydroxybenzoate (4-HBA) to 3-bromo-4-hydroxybenzoate, followed by bromination and decarboxylation of 3-bromo-4-hydroxybenzoate to 2,4-dibromophenol. Can also use 3,4-dihydroxybenzoate, with lower efficiency, forming 3-bromo-4,5-dihydroxybenzoate and 3,5-dibromobenzene-1,2-diol. Can utilize iodide in vivo leading to the formation of iodophenols, but cannot use chloride. The chain is 4-hydroxybenzoate brominase (decarboxylating) from Pseudoalteromonas luteoviolacea (strain 2ta16).